A 320-amino-acid chain; its full sequence is Endolytic peptidoglycan transglycosylase RlpA (320 aa).

This sequence belongs to the RlpA family.

Functionally, lytic transglycosylase with a strong preference for naked glycan strands that lack stem peptides. The chain is Endolytic peptidoglycan transglycosylase RlpA from Rickettsia prowazekii (strain Madrid E).